The following is a 146-amino-acid chain: Hemoglobin subunit beta (146 aa).

The residue at position 1 (valine 1) is an N-acetylvaline. Positions histidine 2–histidine 146 constitute a Globin domain. Residue threonine 12 is modified to Phosphothreonine. Serine 44 is modified (phosphoserine). Lysine 59 is modified (N6-acetyllysine). Position 63 (histidine 63) interacts with heme b. Lysine 82 is modified (N6-acetyllysine). A heme b-binding site is contributed by histidine 92. Cysteine 93 carries the S-nitrosocysteine modification. Lysine 144 bears the N6-acetyllysine mark.

It belongs to the globin family. As to quaternary structure, heterotetramer of two alpha chains and two beta chains. In terms of tissue distribution, red blood cells.

Its function is as follows. Involved in oxygen transport from the lung to the various peripheral tissues. The chain is Hemoglobin subunit beta (HBB) from Mustela lutreola (European mink).